Here is a 273-residue protein sequence, read N- to C-terminus: Ribosomal RNA small subunit methyltransferase A (273 aa).

Asparagine 18, leucine 20, glycine 45, glutamate 66, aspartate 91, and asparagine 113 together coordinate S-adenosyl-L-methionine.

Belongs to the class I-like SAM-binding methyltransferase superfamily. rRNA adenine N(6)-methyltransferase family. RsmA subfamily.

The protein localises to the cytoplasm. It catalyses the reaction adenosine(1518)/adenosine(1519) in 16S rRNA + 4 S-adenosyl-L-methionine = N(6)-dimethyladenosine(1518)/N(6)-dimethyladenosine(1519) in 16S rRNA + 4 S-adenosyl-L-homocysteine + 4 H(+). Functionally, specifically dimethylates two adjacent adenosines (A1518 and A1519) in the loop of a conserved hairpin near the 3'-end of 16S rRNA in the 30S particle. May play a critical role in biogenesis of 30S subunits. This is Ribosomal RNA small subunit methyltransferase A from Escherichia coli O81 (strain ED1a).